A 294-amino-acid chain; its full sequence is Phosphatidylglycerol--prolipoprotein diacylglyceryl transferase (294 aa).

7 helical membrane-spanning segments follow: residues 10-30 (VALA…LLAF), 55-75 (LVFY…VLFY), 91-111 (WEGG…MWFF), 119-139 (AFQV…FGRI), 196-216 (PSQL…LWWY), 224-244 (MAAS…IEFF), and 258-278 (WMTK…IMLI). R138 is a binding site for a 1,2-diacyl-sn-glycero-3-phospho-(1'-sn-glycerol).

This sequence belongs to the Lgt family.

The protein localises to the cell inner membrane. The catalysed reaction is L-cysteinyl-[prolipoprotein] + a 1,2-diacyl-sn-glycero-3-phospho-(1'-sn-glycerol) = an S-1,2-diacyl-sn-glyceryl-L-cysteinyl-[prolipoprotein] + sn-glycerol 1-phosphate + H(+). It functions in the pathway protein modification; lipoprotein biosynthesis (diacylglyceryl transfer). Catalyzes the transfer of the diacylglyceryl group from phosphatidylglycerol to the sulfhydryl group of the N-terminal cysteine of a prolipoprotein, the first step in the formation of mature lipoproteins. The protein is Phosphatidylglycerol--prolipoprotein diacylglyceryl transferase of Psychrobacter arcticus (strain DSM 17307 / VKM B-2377 / 273-4).